We begin with the raw amino-acid sequence, 37 residues long: Large ribosomal subunit protein bL36c (37 aa).

This sequence belongs to the bacterial ribosomal protein bL36 family.

The protein resides in the plastid. The protein localises to the chloroplast. In Chara vulgaris (Common stonewort), this protein is Large ribosomal subunit protein bL36c.